We begin with the raw amino-acid sequence, 336 residues long: DNA-directed RNA polymerase subunit alpha (336 aa).

The interval Met1 to Asp232 is alpha N-terminal domain (alpha-NTD). Residues Phe248–Tyr336 are alpha C-terminal domain (alpha-CTD).

This sequence belongs to the RNA polymerase alpha chain family. As to quaternary structure, homodimer. The RNAP catalytic core consists of 2 alpha, 1 beta, 1 beta' and 1 omega subunit. When a sigma factor is associated with the core the holoenzyme is formed, which can initiate transcription.

The catalysed reaction is RNA(n) + a ribonucleoside 5'-triphosphate = RNA(n+1) + diphosphate. In terms of biological role, DNA-dependent RNA polymerase catalyzes the transcription of DNA into RNA using the four ribonucleoside triphosphates as substrates. The sequence is that of DNA-directed RNA polymerase subunit alpha from Sinorhizobium fredii (strain NBRC 101917 / NGR234).